Consider the following 423-residue polypeptide: Serine--tRNA ligase (423 aa).

Residue 231–233 coordinates L-serine; the sequence is TAE. 262–264 contributes to the ATP binding site; it reads RSE. Glutamate 285 contacts L-serine. Residue 349 to 352 participates in ATP binding; sequence EISS. Serine 384 serves as a coordination point for L-serine.

It belongs to the class-II aminoacyl-tRNA synthetase family. Type-1 seryl-tRNA synthetase subfamily. In terms of assembly, homodimer. The tRNA molecule binds across the dimer.

The protein resides in the cytoplasm. The enzyme catalyses tRNA(Ser) + L-serine + ATP = L-seryl-tRNA(Ser) + AMP + diphosphate + H(+). It catalyses the reaction tRNA(Sec) + L-serine + ATP = L-seryl-tRNA(Sec) + AMP + diphosphate + H(+). Its pathway is aminoacyl-tRNA biosynthesis; selenocysteinyl-tRNA(Sec) biosynthesis; L-seryl-tRNA(Sec) from L-serine and tRNA(Sec): step 1/1. Its function is as follows. Catalyzes the attachment of serine to tRNA(Ser). Is also able to aminoacylate tRNA(Sec) with serine, to form the misacylated tRNA L-seryl-tRNA(Sec), which will be further converted into selenocysteinyl-tRNA(Sec). The protein is Serine--tRNA ligase of Acinetobacter baylyi (strain ATCC 33305 / BD413 / ADP1).